The chain runs to 610 residues: Chaperone protein DnaK (610 aa).

T173 is modified (phosphothreonine; by autocatalysis). Positions 579–592 are enriched in low complexity; it reads QQQQAQGANAGQNN. Positions 579–610 are disordered; that stretch reads QQQQAQGANAGQNNDSTVEDAEFKEVKDDDKK. Residues 599–610 are compositionally biased toward basic and acidic residues; the sequence is AEFKEVKDDDKK.

Belongs to the heat shock protein 70 family.

Its function is as follows. Acts as a chaperone. This Staphylococcus aureus (strain bovine RF122 / ET3-1) protein is Chaperone protein DnaK.